The primary structure comprises 239 residues: Pyridoxine 5'-phosphate synthase (239 aa).

Asn-7 is a binding site for 3-amino-2-oxopropyl phosphate. 9-10 (DH) contacts 1-deoxy-D-xylulose 5-phosphate. Residue Arg-18 coordinates 3-amino-2-oxopropyl phosphate. The active-site Proton acceptor is the His-43. The 1-deoxy-D-xylulose 5-phosphate site is built by Arg-45 and His-50. The active-site Proton acceptor is Glu-70. Residue Thr-100 coordinates 1-deoxy-D-xylulose 5-phosphate. Residue His-191 is the Proton donor of the active site. Residues Gly-192 and 213–214 (GH) each bind 3-amino-2-oxopropyl phosphate.

It belongs to the PNP synthase family. Homooctamer; tetramer of dimers.

The protein localises to the cytoplasm. It catalyses the reaction 3-amino-2-oxopropyl phosphate + 1-deoxy-D-xylulose 5-phosphate = pyridoxine 5'-phosphate + phosphate + 2 H2O + H(+). It functions in the pathway cofactor biosynthesis; pyridoxine 5'-phosphate biosynthesis; pyridoxine 5'-phosphate from D-erythrose 4-phosphate: step 5/5. Its function is as follows. Catalyzes the complicated ring closure reaction between the two acyclic compounds 1-deoxy-D-xylulose-5-phosphate (DXP) and 3-amino-2-oxopropyl phosphate (1-amino-acetone-3-phosphate or AAP) to form pyridoxine 5'-phosphate (PNP) and inorganic phosphate. This Geobacter sp. (strain M21) protein is Pyridoxine 5'-phosphate synthase.